Consider the following 418-residue polypeptide: Homocitrate synthase, mitochondrial (418 aa).

The span at 1 to 10 shows a compositional bias: polar residues; it reads MSVSEANGTE. A disordered region spans residues 1-25; sequence MSVSEANGTETIKPPMNGNPYGPNP. Over residues 14–25 the composition is skewed to low complexity; that stretch reads PPMNGNPYGPNP. One can recognise a Pyruvate carboxyltransferase domain in the interval 35 to 288; sequence FSIIESTLRE…THKYKLNQLR (254 aa). R43, E44, and H103 together coordinate 2-oxoglutarate. An L-lysine-binding site is contributed by E44. E44 serves as a coordination point for Zn(2+). D123 contributes to the L-lysine binding site. 5 residues coordinate 2-oxoglutarate: R163, S165, T197, H224, and H226. T197 contributes to the L-lysine binding site. Zn(2+) contacts are provided by H224 and H226. H321 serves as the catalytic Proton acceptor.

This sequence belongs to the alpha-IPM synthase/homocitrate synthase family. Homocitrate synthase LYS20/LYS21 subfamily. Mg(2+) is required as a cofactor. Requires Mn(2+) as cofactor. It depends on Zn(2+) as a cofactor. The cofactor is Co(2+).

The protein resides in the mitochondrion. The catalysed reaction is acetyl-CoA + 2-oxoglutarate + H2O = (2R)-homocitrate + CoA + H(+). Its pathway is amino-acid biosynthesis; L-lysine biosynthesis via AAA pathway; L-alpha-aminoadipate from 2-oxoglutarate: step 1/5. With respect to regulation, the activity is controled by feedback inhibition by L-lysine, the final product of the pathway that acts as a competitive inhibitor of 2-oxoglutarate. Its function is as follows. Catalyzes the aldol-type condensation of 2-oxoglutarate with acetyl-CoA to yield homocitrate, the first step of the alpha-aminoadipate (AAA) lysine biosynthesis pathway. In Schizosaccharomyces pombe (strain 972 / ATCC 24843) (Fission yeast), this protein is Homocitrate synthase, mitochondrial.